A 386-amino-acid polypeptide reads, in one-letter code: Tumor necrosis factor receptor superfamily member 10D (386 aa).

2 disordered regions span residues 1–25 (MGLWGQSVPTASSARAGRYPGARTA) and 62–90 (DEVPQQTVAPQQQRRSLKEEECPAGSHRS). Residues 1-55 (MGLWGQSVPTASSARAGRYPGARTASGTRPWLLDPKILKFVVFIVAVLLPVRVDS) form the signal peptide. Residues 56–211 (ATIPRQDEVP…ILGMLASPYH (156 aa)) lie on the Extracellular side of the membrane. TNFR-Cys repeat units follow at residues 58 to 97 (IPRQDEVPQQTVAPQQQRRSLKEEECPAGSHRSEYTGACN), 98 to 139 (PCTE…DTVC), and 140 to 180 (QCEK…DIKC). Polar residues predominate over residues 64–75 (VPQQTVAPQQQR). 7 disulfide bridges follow: cysteine 83-cysteine 96, cysteine 99-cysteine 115, cysteine 118-cysteine 131, cysteine 121-cysteine 139, cysteine 141-cysteine 155, cysteine 158-cysteine 172, and cysteine 162-cysteine 180. Asparagine 127 carries N-linked (GlcNAc...) asparagine glycosylation. Asparagine 182 carries N-linked (GlcNAc...) asparagine glycosylation. The helical transmembrane segment at 212-232 (YLIIIVVLVIILAVVVVGFSC) threads the bilayer. The Cytoplasmic segment spans residues 233 to 386 (RKKFISYLKG…DEAGSATSCL (154 aa)). The Death; truncated domain occupies 340–366 (SADISTLLDASATLEEGHAKETIQDQL).

Widely expressed, in particular in fetal kidney, lung and liver, and in adult testis and liver. Also expressed in peripheral blood leukocytes, colon and small intestine, ovary, prostate, thymus, spleen, pancreas, kidney, lung, placenta and heart.

The protein localises to the membrane. Receptor for the cytotoxic ligand TRAIL. Contains a truncated death domain and hence is not capable of inducing apoptosis but protects against TRAIL-mediated apoptosis. Reports are contradictory with regards to its ability to induce the NF-kappa-B pathway. According to PubMed:9382840, it cannot but according to PubMed:9430226, it can induce the NF-kappa-B pathway. This chain is Tumor necrosis factor receptor superfamily member 10D, found in Homo sapiens (Human).